Consider the following 115-residue polypeptide: Large ribosomal subunit protein bL19 (115 aa).

This sequence belongs to the bacterial ribosomal protein bL19 family.

This protein is located at the 30S-50S ribosomal subunit interface and may play a role in the structure and function of the aminoacyl-tRNA binding site. The polypeptide is Large ribosomal subunit protein bL19 (Desulforudis audaxviator (strain MP104C)).